We begin with the raw amino-acid sequence, 501 residues long: Mitogen-activated protein kinase 16 (501 aa).

In terms of domain architecture, Protein kinase spans 22-313; that stretch reads YEVTEVVGKG…AAEALTDPYF (292 aa). ATP-binding positions include 28-36 and Lys51; that span reads VGKGSYGVV. The active-site Proton acceptor is the Asp148. Thr184 is modified (phosphothreonine). Positions 184 to 186 match the TXY motif; the sequence is TDY. At Tyr186 the chain carries Phosphotyrosine. The segment at 477 to 501 is disordered; the sequence is DEESMSEYMNEAADGVPHKIAQLKT.

Belongs to the protein kinase superfamily. CMGC Ser/Thr protein kinase family. MAP kinase subfamily. In terms of processing, dually phosphorylated on Thr-184 and Tyr-186, which activates the enzyme.

It carries out the reaction L-seryl-[protein] + ATP = O-phospho-L-seryl-[protein] + ADP + H(+). It catalyses the reaction L-threonyl-[protein] + ATP = O-phospho-L-threonyl-[protein] + ADP + H(+). Its activity is regulated as follows. Activated by threonine and tyrosine phosphorylation. The sequence is that of Mitogen-activated protein kinase 16 (MPK16) from Oryza sativa subsp. japonica (Rice).